The following is a 914-amino-acid chain: Calcium-activated chloride channel regulator 1 (914 aa).

The N-terminal stretch at 1-21 (MGPFKSSVFILILHLLEGALS) is a signal peptide. The tract at residues 46 to 199 (DETLIQQIKD…GITGTNVVKK (154 aa)) is metalloprotease domain. His-156 serves as a coordination point for Zn(2+). The active site involves Glu-157. Zn(2+) contacts are provided by His-160 and Asp-167. The region spanning 306–475 (IVCLVLDKSG…NGLIDAFGAL (170 aa)) is the VWFA domain. 8 N-linked (GlcNAc...) asparagine glycosylation sites follow: Asn-503, Asn-585, Asn-770, Asn-804, Asn-810, Asn-831, Asn-836, and Asn-890.

The protein belongs to the CLCR family. In terms of processing, glycosylated. Post-translationally, the 125-kDa product is autoproteolytically processed by the metalloprotease domain and yields to two cell-surface-associated subunits, a 90-kDa protein and a group of 37- to 41-kDa proteins. The cleavage is necessary for calcium-activated chloride channel (CaCC) activation activity. As to expression, highly expressed in small intestine and colon namely in intestinal basal crypt epithelia and goblet cells, and appendix. Weakly expressed in uterus, testis and kidney. Expressed in the airways epithelium of both asthmatic and healthy patients. Expressed in the bronchial epithelium, especially in mucus-producing goblet cells. Expressed in normal turbinate mucosa and nasal polyp. Expressed in.

It is found in the secreted. The protein resides in the extracellular space. It localises to the cell membrane. May be involved in mediating calcium-activated chloride conductance. May play critical roles in goblet cell metaplasia, mucus hypersecretion, cystic fibrosis and AHR. May be involved in the regulation of mucus production and/or secretion by goblet cells. Involved in the regulation of tissue inflammation in the innate immune response. May play a role as a tumor suppressor. Induces MUC5AC. In Homo sapiens (Human), this protein is Calcium-activated chloride channel regulator 1 (CLCA1).